An 89-amino-acid chain; its full sequence is Small ribosomal subunit protein uS15 (89 aa).

The protein belongs to the universal ribosomal protein uS15 family. Part of the 30S ribosomal subunit. Forms a bridge to the 50S subunit in the 70S ribosome, contacting the 23S rRNA.

One of the primary rRNA binding proteins, it binds directly to 16S rRNA where it helps nucleate assembly of the platform of the 30S subunit by binding and bridging several RNA helices of the 16S rRNA. Functionally, forms an intersubunit bridge (bridge B4) with the 23S rRNA of the 50S subunit in the ribosome. In Bifidobacterium adolescentis (strain ATCC 15703 / DSM 20083 / NCTC 11814 / E194a), this protein is Small ribosomal subunit protein uS15.